Consider the following 98-residue polypeptide: Large ribosomal subunit protein uL23 (98 aa).

The protein belongs to the universal ribosomal protein uL23 family. As to quaternary structure, part of the 50S ribosomal subunit. Contacts protein L29, and trigger factor when it is bound to the ribosome.

Its function is as follows. One of the early assembly proteins it binds 23S rRNA. One of the proteins that surrounds the polypeptide exit tunnel on the outside of the ribosome. Forms the main docking site for trigger factor binding to the ribosome. The sequence is that of Large ribosomal subunit protein uL23 from Rickettsia akari (strain Hartford).